Here is a 328-residue protein sequence, read N- to C-terminus: Phosphate acyltransferase (328 aa).

This sequence belongs to the PlsX family. Homodimer. Probably interacts with PlsY.

It is found in the cytoplasm. The catalysed reaction is a fatty acyl-[ACP] + phosphate = an acyl phosphate + holo-[ACP]. It functions in the pathway lipid metabolism; phospholipid metabolism. In terms of biological role, catalyzes the reversible formation of acyl-phosphate (acyl-PO(4)) from acyl-[acyl-carrier-protein] (acyl-ACP). This enzyme utilizes acyl-ACP as fatty acyl donor, but not acyl-CoA. The sequence is that of Phosphate acyltransferase from Staphylococcus saprophyticus subsp. saprophyticus (strain ATCC 15305 / DSM 20229 / NCIMB 8711 / NCTC 7292 / S-41).